The primary structure comprises 413 residues: Zeaxanthin glucosyltransferase (413 aa).

The protein belongs to the UDP-glycosyltransferase family.

It carries out the reaction all-trans-zeaxanthin + 2 UDP-alpha-D-glucose = zeaxanthin bis(beta-D-glucoside) + 2 UDP + 2 H(+). The protein operates within carotenoid biosynthesis; zeaxanthin diglucoside biosynthesis. In terms of biological role, catalyzes the glycosylation reaction which converts zeaxanthin to zeaxanthin bis(beta-D-glucoside). The reaction proceeds in two steps with the monoglucoside as an intermediate. The chain is Zeaxanthin glucosyltransferase (crtX) from Pseudescherichia vulneris (Escherichia vulneris).